We begin with the raw amino-acid sequence, 292 residues long: Xanthine dehydrogenase FAD-binding subunit (292 aa).

An FAD-binding PCMH-type domain is found at Met-1 to Lys-176. FAD-binding positions include Lys-27–Asp-34, Ala-109–Gly-113, Ile-165, and Phe-184.

In terms of assembly, heterotrimer of XdhA, XdhB and XdhC. Requires FAD as cofactor.

It carries out the reaction xanthine + NAD(+) + H2O = urate + NADH + H(+). The catalysed reaction is hypoxanthine + NAD(+) + H2O = xanthine + NADH + H(+). It participates in purine metabolism; hypoxanthine degradation; urate from hypoxanthine: step 1/2. Its pathway is purine metabolism; hypoxanthine degradation; urate from hypoxanthine: step 2/2. In terms of biological role, presumed to be a dehydrogenase, but possibly an oxidase. Participates in limited purine salvage (requires aspartate) but does not support aerobic growth on purines as the sole carbon source (purine catabolism). The protein is Xanthine dehydrogenase FAD-binding subunit (xdhB) of Escherichia coli O157:H7.